A 201-amino-acid polypeptide reads, in one-letter code: Ribonuclease MRP protein subunit RMP1 (201 aa).

Residues 86–108 form a helical membrane-spanning segment; that stretch reads YWQFNGVIALGQFVTLGCTLVTL.

In terms of assembly, component of RNase MRP complex which consists of an RNA moiety and at least 10 protein subunits including POP1, POP3, POP4, POP5, POP6, POP7, POP8, RMP1, RPP1 and SNM1, many of which are shared with the RNase P complex.

Its subcellular location is the membrane. It is found in the cytoplasm. It localises to the nucleus. Functionally, functions as part of ribonuclease MRP (RNase MRP), which is involved in rRNA processing in mitochondria. This is Ribonuclease MRP protein subunit RMP1 from Saccharomyces cerevisiae (strain ATCC 204508 / S288c) (Baker's yeast).